We begin with the raw amino-acid sequence, 697 residues long: Elongation factor G 2 (697 aa).

Residues 5–280 (SKYRNIGIFA…AVVDYLPAPD (276 aa)) form the tr-type G domain. GTP-binding positions include 14–21 (AHVDAGKT), 78–82 (DTPGH), and 132–135 (NKLD).

Belongs to the TRAFAC class translation factor GTPase superfamily. Classic translation factor GTPase family. EF-G/EF-2 subfamily.

The protein resides in the cytoplasm. Catalyzes the GTP-dependent ribosomal translocation step during translation elongation. During this step, the ribosome changes from the pre-translocational (PRE) to the post-translocational (POST) state as the newly formed A-site-bound peptidyl-tRNA and P-site-bound deacylated tRNA move to the P and E sites, respectively. Catalyzes the coordinated movement of the two tRNA molecules, the mRNA and conformational changes in the ribosome. This Shewanella sp. (strain MR-7) protein is Elongation factor G 2.